We begin with the raw amino-acid sequence, 320 residues long: Mitochondrial ribosome-associated GTPase 1 (320 aa).

Positions 37 to 209 constitute a CP-type G domain; sequence LKQMRASPRK…LLDTPGVLPP (173 aa). Residues 81–84, 153–158, and Gly-205 contribute to the GTP site; these read NKMD and NVGKSS.

Belongs to the TRAFAC class YlqF/YawG GTPase family. MTG1 subfamily.

Its subcellular location is the mitochondrion inner membrane. Plays a role in the regulation of the mitochondrial ribosome assembly and of translational activity. Displays mitochondrial GTPase activity. This is Mitochondrial ribosome-associated GTPase 1 from Ictalurus punctatus (Channel catfish).